The primary structure comprises 185 residues: Ribosome maturation factor RimM (185 aa).

Residues 106 to 185 form the PRC barrel domain; it reads SGEYYWKDLL…IIEVDWDPGF (80 aa).

It belongs to the RimM family. In terms of assembly, binds ribosomal protein uS19.

It localises to the cytoplasm. An accessory protein needed during the final step in the assembly of 30S ribosomal subunit, possibly for assembly of the head region. Essential for efficient processing of 16S rRNA. May be needed both before and after RbfA during the maturation of 16S rRNA. It has affinity for free ribosomal 30S subunits but not for 70S ribosomes. This chain is Ribosome maturation factor RimM, found in Sodalis glossinidius (strain morsitans).